Here is a 442-residue protein sequence, read N- to C-terminus: ATP-dependent protease ATPase subunit HslU (442 aa).

Residues isoleucine 18 and 60 to 65 contribute to the ATP site; that span reads GVGKTE. Residues 137–156 form a disordered region; it reads PKPKNDWESTETDSSSNTRQ. Residues aspartate 255, glutamate 320, and arginine 392 each coordinate ATP.

This sequence belongs to the ClpX chaperone family. HslU subfamily. In terms of assembly, a double ring-shaped homohexamer of HslV is capped on each side by a ring-shaped HslU homohexamer. The assembly of the HslU/HslV complex is dependent on binding of ATP.

It is found in the cytoplasm. Functionally, ATPase subunit of a proteasome-like degradation complex; this subunit has chaperone activity. The binding of ATP and its subsequent hydrolysis by HslU are essential for unfolding of protein substrates subsequently hydrolyzed by HslV. HslU recognizes the N-terminal part of its protein substrates and unfolds these before they are guided to HslV for hydrolysis. This is ATP-dependent protease ATPase subunit HslU from Shewanella baltica (strain OS155 / ATCC BAA-1091).